Reading from the N-terminus, the 274-residue chain is Large ribosomal subunit protein uL2cz/uL2cy (274 aa).

Disordered stretches follow at residues 1–22 (MAIH…DSQV) and 225–274 (PVDH…RRSK).

The protein belongs to the universal ribosomal protein uL2 family. As to quaternary structure, part of the 50S ribosomal subunit.

The protein resides in the plastid. It localises to the chloroplast. This chain is Large ribosomal subunit protein uL2cz/uL2cy (rpl2-A), found in Arabis hirsuta (Hairy rock-cress).